The chain runs to 225 residues: 7-carboxy-7-deazaguanine synthase (225 aa).

Substrate is bound by residues 12 to 14 (IQG) and arginine 27. The Radical SAM core domain occupies 18–225 (YIGVRQLFVR…PQVHKYLGVR (208 aa)). Cysteine 31, cysteine 35, and cysteine 38 together coordinate [4Fe-4S] cluster. Threonine 40 lines the Mg(2+) pocket. Residue threonine 80 participates in substrate binding. S-adenosyl-L-methionine is bound at residue glycine 82.

This sequence belongs to the radical SAM superfamily. 7-carboxy-7-deazaguanine synthase family. In terms of assembly, homodimer. Requires [4Fe-4S] cluster as cofactor. S-adenosyl-L-methionine is required as a cofactor. It depends on Mg(2+) as a cofactor.

It catalyses the reaction 6-carboxy-5,6,7,8-tetrahydropterin + H(+) = 7-carboxy-7-deazaguanine + NH4(+). Its pathway is purine metabolism; 7-cyano-7-deazaguanine biosynthesis. In terms of biological role, catalyzes the complex heterocyclic radical-mediated conversion of 6-carboxy-5,6,7,8-tetrahydropterin (CPH4) to 7-carboxy-7-deazaguanine (CDG), a step common to the biosynthetic pathways of all 7-deazapurine-containing compounds. In Archaeoglobus fulgidus (strain ATCC 49558 / DSM 4304 / JCM 9628 / NBRC 100126 / VC-16), this protein is 7-carboxy-7-deazaguanine synthase.